A 270-amino-acid chain; its full sequence is Phosphonoacetaldehyde hydrolase (270 aa).

The active-site Nucleophile is the D11. Mg(2+)-binding residues include D11 and A13. The Schiff-base intermediate with substrate role is filled by K53. D187 is a Mg(2+) binding site.

The protein belongs to the HAD-like hydrolase superfamily. PhnX family. Homodimer. Requires Mg(2+) as cofactor.

The catalysed reaction is phosphonoacetaldehyde + H2O = acetaldehyde + phosphate + H(+). Its function is as follows. Involved in phosphonate degradation. This is Phosphonoacetaldehyde hydrolase from Salmonella enteritidis PT4 (strain P125109).